A 189-amino-acid polypeptide reads, in one-letter code: Adenine phosphoribosyltransferase (189 aa).

The protein belongs to the purine/pyrimidine phosphoribosyltransferase family. In terms of assembly, homodimer.

It is found in the cytoplasm. The catalysed reaction is AMP + diphosphate = 5-phospho-alpha-D-ribose 1-diphosphate + adenine. It functions in the pathway purine metabolism; AMP biosynthesis via salvage pathway; AMP from adenine: step 1/1. Catalyzes a salvage reaction resulting in the formation of AMP, that is energically less costly than de novo synthesis. The sequence is that of Adenine phosphoribosyltransferase from Frankia alni (strain DSM 45986 / CECT 9034 / ACN14a).